The chain runs to 315 residues: DDRGK domain-containing protein 1 (315 aa).

A helical membrane pass occupies residues 1-28 (MVGPWVYLVAAVLLIGLILFLTRSRGRA). The interval 1 to 115 (MVGPWVYLVA…IEKPAEVHPT (115 aa)) is mediates interaction with CDK5RAP3. The Cytoplasmic portion of the chain corresponds to 29 to 315 (AAADGEPLHN…GQDLPAQASA (287 aa)). Residues 30-184 (AADGEPLHNE…ERKAQEEQAR (155 aa)) are disordered. Over residues 34–43 (EPLHNEEERA) the composition is skewed to basic and acidic residues. Residue S73 is modified to Phosphoserine. The mediates interaction with TRIP4 stretch occupies residues 119 to 217 (GAKKLRKLEE…MTEEQSHSFL (99 aa)). A compositionally biased stretch (basic and acidic residues) spans 125–184 (KLEEKQARKAQREAEEAEREERKRLESQREAEWKKEEERLRLKEEQKEEEERKAQEEQAR). Residues 196 to 210 (AFVVEEEGVSETMTE) carry the UFM1-interacting motif (UFIM) motif. The interval 217 to 315 (LTEFINYIKK…GQDLPAQASA (99 aa)) is mediates interaction with UFL1. One can recognise a PCI domain in the interval 230-274 (VLLEDLAFQMGLRTQDAINRIQDLLTEGTLTGVIDDRGKFIYITP). A Glycyl lysine isopeptide (Lys-Gly) (interchain with G-Cter in UFM1) cross-link involves residue K268.

The protein belongs to the DDRGK1 family. Component of the UFM1 ribosome E3 ligase (UREL) complex, composed of UFL1, DDRGK1 and CDK5RAP3. Interacts with (unphosphorylated) ERN1/IRE1-alpha; interaction is dependent on UFM1 and takes place in response to endoplasmic reticulum stress, regulating ERN1/IRE1-alpha stability. Interacts with NFKBIA. Interacts with SOX9. In terms of processing, ufmylated; conjugated to ubiquitin-like protein UFM1, probably at Lys-268 by UFL1. The relevance of ufmylation is however unclear: as DDRGK1 acts as a substrate adapter for ufmylation, it is uncertain whether ufmylation is a collateral effect of the ufmylation process or whether it is required to regulate its activity. Post-translationally, ubiquitinated. Ubiquitination probably triggers proteasomal degradation and is negatively regulated by UFL1, the enzyme involved in the ufmylation of DDRGK1. As to expression, ubiquitously expressed. Higher expression in pancreatic islets, pancreatic acini and testis (at protein level). Highly expressed in the intestinal exocrine cells.

Its subcellular location is the endoplasmic reticulum membrane. In terms of biological role, component of the UFM1 ribosome E3 ligase (UREL) complex, a multiprotein complex that catalyzes ufmylation of endoplasmic reticulum-docked proteins. The UREL complex plays a key role in ribosome recycling by mediating mono-ufmylation of the RPL26/uL24 subunit of the 60S ribosome following ribosome dissociation: ufmylation weakens the junction between post-termination 60S subunits and SEC61 translocons, promoting release and recycling of the large ribosomal subunit from the endoplasmic reticulum membrane. Ufmylation of RPL26/uL24 and subsequent 60S ribosome recycling either take place after normal termination of translation or after ribosome stalling during cotranslational translocation at the endoplasmic reticulum. Within the UREL complex, DDRGK1 tethers the complex to the endoplasmic reticulum membrane to restrict its activity to endoplasmic reticulum-docked ribosomes and acts as an ufmylation 'reader': following RPL26/uL24 ufmylation, DDRGK1 specifically binds to ufmylated RPL26/uL24 via its UFIM motif, resulting in stable association between the 60S ribosome and the UREL complex, followed by dissociation of the 60S ribosome subunit from the endoplasmic reticulum membrane. The UREL complex is also involved in reticulophagy in response to endoplasmic reticulum stress by promoting ufmylation of proteins such as CYB5R3 and RPN1, thereby promoting lysosomal degradation of ufmylated proteins. Ufmylation-dependent reticulophagy inhibits the unfolded protein response (UPR) by regulating ERN1/IRE1-alpha stability. Acts as a regulator of immunity by promoting differentiation of B-cells into plasma cells: acts by promoting expansion of the endoplasmic reticulum and regulating the unfolded protein response (UPR). May also be required for TRIP4 ufmylation. May play a role in NF-kappa-B-mediated transcription through regulation of the phosphorylation and the degradation of NFKBIA, the inhibitor of NF-kappa-B. Plays a role in cartilage development through SOX9, inhibiting the ubiquitin-mediated proteasomal degradation of this transcriptional regulator. Required for stabilization and ufmylation of ATG9A. This Mus musculus (Mouse) protein is DDRGK domain-containing protein 1.